The sequence spans 201 residues: MPKYYCEYCDIYLTHSSPVGRRQHNQGRKHISAKIEYFQNLLREEGITPQNFLGFLGNQGYNNALANPMMNNFMPGNYNAYMKYNPMRNYHHSNRNPNYQHSIGMHNNKYSRAGYVPPGSNKYPNNHFHNNKRINNIQKPYNNFDNKNNNYNNKPITNSSYKNDKQDYRNNNENNDNMNSNHFSNYQMNKENANFVNKNNE.

The Matrin-type zinc finger occupies Tyr4–Glu36. The segment covering Ile137 to Lys154 has biased composition (low complexity). Residues Ile137–Asp176 are disordered.

Belongs to the U1 small nuclear ribonucleoprotein C family. As to quaternary structure, U1 snRNP is composed of the 7 core Sm proteins B/B', D1, D2, D3, E, F and G that assemble in a heptameric protein ring on the Sm site of the small nuclear RNA to form the core snRNP, and at least 3 U1 snRNP-specific proteins U1-70K, U1-A and U1-C. U1-C interacts with U1 snRNA and the 5' splice-site region of the pre-mRNA.

It is found in the nucleus. Its function is as follows. Component of the spliceosomal U1 snRNP, which is essential for recognition of the pre-mRNA 5' splice-site and the subsequent assembly of the spliceosome. U1-C is directly involved in initial 5' splice-site recognition for both constitutive and regulated alternative splicing. The interaction with the 5' splice-site seems to precede base-pairing between the pre-mRNA and the U1 snRNA. Stimulates commitment or early (E) complex formation by stabilizing the base pairing of the 5' end of the U1 snRNA and the 5' splice-site region. The polypeptide is U1 small nuclear ribonucleoprotein C (Plasmodium yoelii yoelii).